A 226-amino-acid polypeptide reads, in one-letter code: Ribosomal RNA small subunit methyltransferase G (226 aa).

S-adenosyl-L-methionine is bound by residues Gly-95, Leu-100, 146-147, and Arg-159; that span reads VE.

The protein belongs to the methyltransferase superfamily. RNA methyltransferase RsmG family.

It is found in the cytoplasm. The catalysed reaction is guanosine(527) in 16S rRNA + S-adenosyl-L-methionine = N(7)-methylguanosine(527) in 16S rRNA + S-adenosyl-L-homocysteine. Functionally, specifically methylates the N7 position of guanine in position 527 of 16S rRNA. This chain is Ribosomal RNA small subunit methyltransferase G, found in Acidovorax sp. (strain JS42).